The chain runs to 280 residues: ATP synthase gamma chain (280 aa).

Belongs to the ATPase gamma chain family. F-type ATPases have 2 components, CF(1) - the catalytic core - and CF(0) - the membrane proton channel. CF(1) has five subunits: alpha(3), beta(3), gamma(1), delta(1), epsilon(1). CF(0) has three main subunits: a, b and c.

The protein localises to the cell membrane. In terms of biological role, produces ATP from ADP in the presence of a proton gradient across the membrane. The gamma chain is believed to be important in regulating ATPase activity and the flow of protons through the CF(0) complex. This is ATP synthase gamma chain from Mycoplasma mycoides subsp. mycoides SC (strain CCUG 32753 / NCTC 10114 / PG1).